The sequence spans 259 residues: MAVISMKQLLEAGVHFGHQTRRWNPKMAKYIFTERNGIHVIDLQQTVKYADQAYDFMRDAAANDAVVLFVGTKKQAADAVAEEAVRSGQYFINHRWLGGTLTNWGTIQKRIARLKEIKRMEEDGTFEVLPKKEVALLNKQRARLEKFLGGIEDMPRIPDVMYVVDPHKEQIAVKEAKKLGIPVVAMVDTNTDPDDIDVIIPANDDAIRAVKLITAKLADAIIEGRQGEDAVAVEAEFAASETQADSIEEIVEVVEGDNA.

This sequence belongs to the universal ribosomal protein uS2 family.

The protein is Small ribosomal subunit protein uS2 of Streptococcus pneumoniae (strain 70585).